The sequence spans 213 residues: ATP-dependent dethiobiotin synthetase BioD 2 (213 aa).

13–18 provides a ligand contact to ATP; the sequence is DIGKTI. Threonine 17 serves as a coordination point for Mg(2+). Lysine 38 is a catalytic residue. Position 42 (threonine 42) interacts with substrate. Residues aspartate 50 and 115 to 118 each bind ATP; that span reads EGAG. Mg(2+) contacts are provided by aspartate 50 and glutamate 115.

Belongs to the dethiobiotin synthetase family. In terms of assembly, homodimer. It depends on Mg(2+) as a cofactor.

Its subcellular location is the cytoplasm. It carries out the reaction (7R,8S)-7,8-diammoniononanoate + CO2 + ATP = (4R,5S)-dethiobiotin + ADP + phosphate + 3 H(+). It functions in the pathway cofactor biosynthesis; biotin biosynthesis; biotin from 7,8-diaminononanoate: step 1/2. Catalyzes a mechanistically unusual reaction, the ATP-dependent insertion of CO2 between the N7 and N8 nitrogen atoms of 7,8-diaminopelargonic acid (DAPA, also called 7,8-diammoniononanoate) to form a ureido ring. This chain is ATP-dependent dethiobiotin synthetase BioD 2, found in Pasteurella multocida (strain Pm70).